Consider the following 651-residue polypeptide: Endoplasmic reticulum chaperone BiP (651 aa).

Residues 1-20 (MGLSTYVGIFLLCILTLSRC) form the signal peptide. ATP is bound by residues 36-39 (GTTY), K96, 226-228 (GGT), 292-299 (EKAKRTLS), and 363-366 (GSTR). Residues 125 to 279 (KPYMKVQVGS…KKKEGKDITK (155 aa)) form a nucleotide-binding (NBD) region. Residues 399–499 (VQAGVISGVE…PRGLPQIEVT (101 aa)) form a substrate-binding (SBD) region. Positions 648-651 (KEEL) match the Prevents secretion from ER motif.

Belongs to the heat shock protein 70 family.

The protein resides in the endoplasmic reticulum lumen. The catalysed reaction is ATP + H2O = ADP + phosphate + H(+). With respect to regulation, the chaperone activity is regulated by ATP-induced allosteric coupling of the nucleotide-binding (NBD) and substrate-binding (SBD) domains. In the ADP-bound and nucleotide-free (apo) states, the two domains have little interaction. In contrast, in the ATP-bound state the two domains are tightly coupled, which results in drastically accelerated kinetics in both binding and release of polypeptide substrates. J domain-containing co-chaperones stimulate the ATPase activity and are required for efficient substrate recognition. In terms of biological role, endoplasmic reticulum chaperone that plays a key role in protein folding and quality control in the endoplasmic reticulum lumen. Involved in the correct folding of proteins and degradation of misfolded proteins. Acts as a key repressor of the unfolded protein response (UPR). The chain is Endoplasmic reticulum chaperone BiP from Echinococcus granulosus (Hydatid tapeworm).